The chain runs to 178 residues: MVMLADALVKRMIEVGALKFGDFVLSSGKRSRVYVDVKLASTFPDILEMISEGMAAKLKDLEFDRIACVELGGVPIAVALSLKMKKPLVIFRKEKKDYGIKGDRIGEVKEGEKVVVVEDVITTGSSALSAARRVEESGASVAAIIAVVDREESGRNFMSLLKLSDLIEAHDSIQPTES.

5-phospho-alpha-D-ribose 1-diphosphate-binding positions include Arg92, Lys93, Lys96, and 118-126; that span reads EDVITTGSS. Residues Thr122 and Arg150 each coordinate orotate.

Belongs to the purine/pyrimidine phosphoribosyltransferase family. PyrE subfamily. In terms of assembly, homodimer. Requires Mg(2+) as cofactor.

The catalysed reaction is orotidine 5'-phosphate + diphosphate = orotate + 5-phospho-alpha-D-ribose 1-diphosphate. Its pathway is pyrimidine metabolism; UMP biosynthesis via de novo pathway; UMP from orotate: step 1/2. Catalyzes the transfer of a ribosyl phosphate group from 5-phosphoribose 1-diphosphate to orotate, leading to the formation of orotidine monophosphate (OMP). The chain is Orotate phosphoribosyltransferase from Archaeoglobus fulgidus (strain ATCC 49558 / DSM 4304 / JCM 9628 / NBRC 100126 / VC-16).